The following is a 328-amino-acid chain: Tetraacyldisaccharide 4'-kinase (328 aa).

An ATP-binding site is contributed by 55-62 (TAGGNGKT).

It belongs to the LpxK family.

It catalyses the reaction a lipid A disaccharide + ATP = a lipid IVA + ADP + H(+). Its pathway is glycolipid biosynthesis; lipid IV(A) biosynthesis; lipid IV(A) from (3R)-3-hydroxytetradecanoyl-[acyl-carrier-protein] and UDP-N-acetyl-alpha-D-glucosamine: step 6/6. In terms of biological role, transfers the gamma-phosphate of ATP to the 4'-position of a tetraacyldisaccharide 1-phosphate intermediate (termed DS-1-P) to form tetraacyldisaccharide 1,4'-bis-phosphate (lipid IVA). This chain is Tetraacyldisaccharide 4'-kinase, found in Escherichia coli O127:H6 (strain E2348/69 / EPEC).